The sequence spans 395 residues: Argininosuccinate synthase (395 aa).

Residues A6 to S14 and A33 contribute to the ATP site. Y84 provides a ligand contact to L-citrulline. Residue G114 coordinates ATP. L-aspartate-binding residues include T116, N120, and D121. N120 lines the L-citrulline pocket. The L-citrulline site is built by R124, S173, S182, E258, and Y270.

It belongs to the argininosuccinate synthase family. Type 1 subfamily. Homotetramer.

The protein resides in the cytoplasm. It catalyses the reaction L-citrulline + L-aspartate + ATP = 2-(N(omega)-L-arginino)succinate + AMP + diphosphate + H(+). The protein operates within amino-acid biosynthesis; L-arginine biosynthesis; L-arginine from L-ornithine and carbamoyl phosphate: step 2/3. The chain is Argininosuccinate synthase from Rhodococcoides fascians (Rhodococcus fascians).